The following is a 250-amino-acid chain: Probable transcriptional regulatory protein MAP_1030 (250 aa).

This sequence belongs to the TACO1 family.

It localises to the cytoplasm. The chain is Probable transcriptional regulatory protein MAP_1030 from Mycolicibacterium paratuberculosis (strain ATCC BAA-968 / K-10) (Mycobacterium paratuberculosis).